Here is a 401-residue protein sequence, read N- to C-terminus: CLIP domain-containing serine protease B9 (401 aa).

Positions 1-26 (MTSYNRSVAWLTVCVLLALHIGGSHQ) are cleaved as a signal peptide. Positions 30-85 (QCTTPTRLRGRCISIYECDSILDYFKQRILTWEEREFLRKSQCTGATSGRQPFVCC) constitute a Clip domain. Cystine bridges form between cysteine 31–cysteine 84, cysteine 41–cysteine 72, and cysteine 47–cysteine 85. Asparagine 88 carries N-linked (GlcNAc...) asparagine glycosylation. Residues 148-400 (IYGGQNADID…YMAWVRSNIK (253 aa)) enclose the Peptidase S1 domain. Cysteines 178 and 194 form a disulfide. Active-site charge relay system residues include histidine 193 and aspartate 257. Cystine bridges form between cysteine 322/cysteine 339 and cysteine 349/cysteine 376. Residue asparagine 330 is glycosylated (N-linked (GlcNAc...) asparagine). The Charge relay system role is filled by serine 353.

It belongs to the peptidase S1 family. CLIP subfamily. Forms a covalent heterodimer with SRPN2; the interaction inhibits CLIPB9 protease activity. Post-translationally, proteolytic cleavage is necessary for activation.

The protein resides in the secreted. With respect to regulation, inhibited by serpin SRPN2. Its function is as follows. Serine protease that functions in the melanization-mediated immune response. Cleaves and activates prophenoloxidase (PPO), which is required for the activation of the prophenoloxidase cascade probably following the recognition of pathogen-derived products. This Anopheles gambiae (African malaria mosquito) protein is CLIP domain-containing serine protease B9.